A 148-amino-acid polypeptide reads, in one-letter code: Large ribosomal subunit protein bL9 (148 aa).

The protein belongs to the bacterial ribosomal protein bL9 family.

Binds to the 23S rRNA. The sequence is that of Large ribosomal subunit protein bL9 from Geobacter sulfurreducens (strain ATCC 51573 / DSM 12127 / PCA).